We begin with the raw amino-acid sequence, 1293 residues long: MEIIRGAPALSTFRVQKLMEACVSAALPVRQIYAEYVHLADLSELLKPTEREQLEKILTYGPAIEAHTPQGSLLFVTPRPGTISPWSSKATDIAHNCGLGKVKRLERGIAYYVESDTLTAEQQRTLQGLLHDRMVEVVLNDFAKADVLFKRTEPAPFKSVNVLAEGRRALEVANVEMGLALAEDEIDYLVENFVRLNRNPNDIELMMFAQANSEHCRHKIFNADWTIDGKAQPKSLFKMIKNTFEVTPDHVLSAYKDNAAVMEGSVAGRFFPDPNGVYSYHTEPMHVLMKVETHNHPTAISPYPGAATGSGGEIRDEGATGRGSKPKAGLTGFSVSNLKIPGFVQPWEGNYGKPDRIVSALDIMTEGPLGGAAFNNEFGRPALLGYFRTYEQEVSSHNGVEMRGYHKPIMLAGGLGNIREEHVQKGEITVGAKLIVLGGPAMNIGLGGGAASSMASGQSSEDLDFASVQRENPEMERRCQEVIDRCWQLGDKNPIQFIHDVGAGGLSNAFPELVNDGDRGGIFNLRNVPSDEPGMSPLEIWCNESQERYVLSVAAEDLPLFTAICERERAPFAVVGEAIQEQHLTLADSHFDNNPIDLPLEVLLGKAPKMSRNVVSAKAVSPALEQSQIDVKDAVKRVLSLPTVADKTFLITIGDRTVTGLVNRDQMVGPWQVPVADCAVTAASFDTYAGEAMSLGERTPLALLDFGASARMAVAESIMNIAGADIGSFKRIKLSANWMSAAGHPGEDAGLYEAVKAVGEELCPELSLTIPVGKDSMSMKTAWQQDGVNKTVTSPMSLVITAFGVVQDIRNTVTPELRSDKGETSLLLVDLGAGQNRLGGSCLAQVYGELGDVAPDLDDAALLRGFFETMQKLVANKLVIAYHDRSDGGLFTTLVEMAFAGNIGLDIDVEDLQGTDLERLFNEELGAVLQVSRDNAAKIAAQFAIAGVPCHVIGTLADDQCITIKDGAREIFSDTRVALRTVWSETTYRMQAMRDNPACALEEFKLKQDETDLGLTVNLSFDPSEDVAAPYILKGAAPKMAILREQGVNSHVEMAAAFDRAGFESRDVHMSDILSGRISLEEFQGLVACGGFSYGDVLGAGEGWAKSILFNERARNEFSRFFERDSSFALGVCNGCQMLSNLKEIIPGSEHWPRFVRNRSERFEARFSLVEVQQSPSLFFQGMAGSRMPIAVSHGEGHAEFASAQALALAEASGTIALRFVNGKGEIATQYPQNPNGSPNGLTGICTTDGRVTLMMPHPERVFRTVANSWHPDNWGEDSPWMRMFRNARVNLG.

ATP is bound by residues 305–316 (GAATGSGGEIRD) and alanine 676. The tract at residues 305–327 (GAATGSGGEIRDEGATGRGSKPK) is disordered. Residues aspartate 677, glutamate 716, asparagine 720, and aspartate 884 each contribute to the Mg(2+) site. Position 886 (serine 886) interacts with ATP. The Glutamine amidotransferase type-1 domain maps to 1040–1293 (MAILREQGVN…MFRNARVNLG (254 aa)). The active-site Nucleophile is cysteine 1133. Catalysis depends on residues histidine 1258 and glutamate 1260.

The protein in the N-terminal section; belongs to the FGAMS family. In terms of assembly, monomer.

It is found in the cytoplasm. It carries out the reaction N(2)-formyl-N(1)-(5-phospho-beta-D-ribosyl)glycinamide + L-glutamine + ATP + H2O = 2-formamido-N(1)-(5-O-phospho-beta-D-ribosyl)acetamidine + L-glutamate + ADP + phosphate + H(+). Its pathway is purine metabolism; IMP biosynthesis via de novo pathway; 5-amino-1-(5-phospho-D-ribosyl)imidazole from N(2)-formyl-N(1)-(5-phospho-D-ribosyl)glycinamide: step 1/2. Its function is as follows. Phosphoribosylformylglycinamidine synthase involved in the purines biosynthetic pathway. Catalyzes the ATP-dependent conversion of formylglycinamide ribonucleotide (FGAR) and glutamine to yield formylglycinamidine ribonucleotide (FGAM) and glutamate. This chain is Phosphoribosylformylglycinamidine synthase, found in Shewanella oneidensis (strain ATCC 700550 / JCM 31522 / CIP 106686 / LMG 19005 / NCIMB 14063 / MR-1).